We begin with the raw amino-acid sequence, 327 residues long: Cytochrome c oxidase subunit 2 (327 aa).

An N-terminal signal peptide occupies residues 1–23 (MEQIPASIWTLTAGVVVTLISFW). A run of 2 helical transmembrane segments spans residues 56–78 (LFLV…AGEE) and 96–114 (AIPA…DIFQ). H221, C255, C259, and H263 together coordinate Cu cation.

The protein belongs to the cytochrome c oxidase subunit 2 family. Requires Cu cation as cofactor.

The protein resides in the cell membrane. It carries out the reaction 4 Fe(II)-[cytochrome c] + O2 + 8 H(+)(in) = 4 Fe(III)-[cytochrome c] + 2 H2O + 4 H(+)(out). Functionally, subunits I and II form the functional core of the enzyme complex. Electrons originating in cytochrome c are transferred via heme a and Cu(A) to the binuclear center formed by heme a3 and Cu(B). The polypeptide is Cytochrome c oxidase subunit 2 (ctaC) (Thermostichus vulcanus (Synechococcus vulcanus)).